The chain runs to 242 residues: MASKLELLPAVDVRDGQAVRLVHGESGTETSYGSPLEAALAWQRSGAEWLHLVDLDAAFGTGDNRALIAEVAGAMDIKVELSGGIRDDDTLAAALATGCTRVNLGTAALETPEWVAKVIAEHGDKIAVGLDVRGTTLRGRGWTRDGGDLYETLERLNSEGCARYVVTDIAKDGTLQGPNLELLRNVCAATDRPVVASGGVSSLDDLRAIAALVPLGVEGSIVGKALYAKAFTLEEALEAVAK.

Asp-12 serves as the catalytic Proton acceptor. The Proton donor role is filled by Asp-131.

This sequence belongs to the HisA/HisF family.

It is found in the cytoplasm. It catalyses the reaction 1-(5-phospho-beta-D-ribosyl)-5-[(5-phospho-beta-D-ribosylamino)methylideneamino]imidazole-4-carboxamide = 5-[(5-phospho-1-deoxy-D-ribulos-1-ylimino)methylamino]-1-(5-phospho-beta-D-ribosyl)imidazole-4-carboxamide. The catalysed reaction is N-(5-phospho-beta-D-ribosyl)anthranilate = 1-(2-carboxyphenylamino)-1-deoxy-D-ribulose 5-phosphate. It participates in amino-acid biosynthesis; L-histidine biosynthesis; L-histidine from 5-phospho-alpha-D-ribose 1-diphosphate: step 4/9. It functions in the pathway amino-acid biosynthesis; L-tryptophan biosynthesis; L-tryptophan from chorismate: step 3/5. Involved in both the histidine and tryptophan biosynthetic pathways. The polypeptide is Phosphoribosyl isomerase A (Streptomyces avermitilis (strain ATCC 31267 / DSM 46492 / JCM 5070 / NBRC 14893 / NCIMB 12804 / NRRL 8165 / MA-4680)).